The chain runs to 461 residues: Thyroid hormone receptor beta (461 aa).

The interval 1–24 (MTPNSMTENGLPAWDKQKPRPDRG) is disordered. Residues 1–106 (MTPNSMTENG…IPSYLDKDEL (106 aa)) are modulating. The span at 15–24 (DKQKPRPDRG) shows a compositional bias: basic and acidic residues. Zn(2+) contacts are provided by Cys107, Cys110, Cys124, Cys127, Cys145, Cys151, Cys161, and Cys164. 2 NR C4-type zinc fingers span residues 107 to 127 (CVVC…CEGC) and 145 to 169 (CKYE…FKKC). Residues 107–181 (CVVCGDKATG…VGMATDLVLD (75 aa)) constitute a DNA-binding region (nuclear receptor). The region spanning 217–461 (EEWELIKTVT…PPLFLEVFED (245 aa)) is the NR LBD domain. Positions 244 to 461 (KFLPEDIGQA…PPLFLEVFED (218 aa)) are interaction with NR2F6. The 3,3',5-triiodo-L-thyronine site is built by Arg282, Asn331, and His435. Residues Arg282, Asn331, and His435 each coordinate L-thyroxine.

The protein belongs to the nuclear hormone receptor family. NR1 subfamily. As to quaternary structure, binds DNA as a dimer; homodimer and heterodimer with RXRB. Interacts with the coactivators NCOA1/SRC1, NCOA2/GRIP1, NCOA7 and MED1/TRAP220 in a ligand-inducible manner. Interacts with the corepressor NCOR1 in absence of ligand. Interacts with C1D. Interacts with NR2F6; the interaction impairs the binding of the THRB homodimer and THRB:RXRB heterodimer to T3 response elements. Interacts with PRMT2 and THRSP. Interacts with TACC1; this interaction is decreased in the presence of thyroid hormone T3.

It is found in the nucleus. Functionally, nuclear hormone receptor that can act as a repressor or activator of transcription. High affinity receptor for thyroid hormones, including triiodothyronine and thyroxine. The sequence is that of Thyroid hormone receptor beta (Thrb) from Mus musculus (Mouse).